Consider the following 326-residue polypeptide: DNA-directed RNA polymerase subunit alpha (326 aa).

The alpha N-terminal domain (alpha-NTD) stretch occupies residues 1 to 231 (MQSNSLLKPR…DQLSVFADLE (231 aa)). The tract at residues 245-326 (IDPVLLRPVD…WPPAGLEKLG (82 aa)) is alpha C-terminal domain (alpha-CTD).

This sequence belongs to the RNA polymerase alpha chain family. In terms of assembly, homodimer. The RNAP catalytic core consists of 2 alpha, 1 beta, 1 beta' and 1 omega subunit. When a sigma factor is associated with the core the holoenzyme is formed, which can initiate transcription.

It carries out the reaction RNA(n) + a ribonucleoside 5'-triphosphate = RNA(n+1) + diphosphate. DNA-dependent RNA polymerase catalyzes the transcription of DNA into RNA using the four ribonucleoside triphosphates as substrates. The polypeptide is DNA-directed RNA polymerase subunit alpha (Aromatoleum aromaticum (strain DSM 19018 / LMG 30748 / EbN1) (Azoarcus sp. (strain EbN1))).